Reading from the N-terminus, the 1333-residue chain is Inner capsid protein VP1 (1333 aa).

The segment covering 1-10 (MHSTTNNSNK) has biased composition (polar residues). The disordered stretch occupies residues 1-93 (MHSTTNNSNK…MDMEKAAETT (93 aa)). The span at 11 to 20 (RNNEEKHKQP) shows a compositional bias: basic and acidic residues. The segment covering 64-82 (DGASRSGTNAKVATASSAR) has biased composition (polar residues).

Belongs to the turreted BTV-fold inner capsid family. In terms of assembly, homodecamer; each decamer is made up of two conformers of VP2, called VP2A and VP2B. 12 homodecamers assemble to form an icosahedral capsid.

It is found in the virion. Its function is as follows. Inner capsid protein that self-assembles to form an icosahedral capsid with a T=2 symmetry, which consists of 120 copies of VP2, with channels at each of its five-fold vertices. This capsid constitutes the innermost concentric layer of the viral mature particle. This Lymantria dispar cypovirus 1 (isolate Rao) (LdCPV-1) protein is Inner capsid protein VP1 (S1).